The primary structure comprises 80 residues: Large ribosomal subunit protein bL31 (80 aa).

Residues C16, C18, C38, and C41 each contribute to the Zn(2+) site.

The protein belongs to the bacterial ribosomal protein bL31 family. Type A subfamily. In terms of assembly, part of the 50S ribosomal subunit. Zn(2+) serves as cofactor.

Binds the 23S rRNA. The sequence is that of Large ribosomal subunit protein bL31 from Mycobacterium bovis (strain ATCC BAA-935 / AF2122/97).